A 254-amino-acid polypeptide reads, in one-letter code: 5'/3'-nucleotidase SurE (254 aa).

A divalent metal cation-binding residues include Asp-9, Asp-10, Ser-40, and Asn-93.

It belongs to the SurE nucleotidase family. Requires a divalent metal cation as cofactor.

It is found in the cytoplasm. The enzyme catalyses a ribonucleoside 5'-phosphate + H2O = a ribonucleoside + phosphate. It catalyses the reaction a ribonucleoside 3'-phosphate + H2O = a ribonucleoside + phosphate. It carries out the reaction [phosphate](n) + H2O = [phosphate](n-1) + phosphate + H(+). Its function is as follows. Nucleotidase with a broad substrate specificity as it can dephosphorylate various ribo- and deoxyribonucleoside 5'-monophosphates and ribonucleoside 3'-monophosphates with highest affinity to 3'-AMP. Also hydrolyzes polyphosphate (exopolyphosphatase activity) with the preference for short-chain-length substrates (P20-25). Might be involved in the regulation of dNTP and NTP pools, and in the turnover of 3'-mononucleotides produced by numerous intracellular RNases (T1, T2, and F) during the degradation of various RNAs. The polypeptide is 5'/3'-nucleotidase SurE (Yersinia pestis bv. Antiqua (strain Antiqua)).